Consider the following 327-residue polypeptide: MAKAPMRVAVTGAAGQIGYSLLFRIANGDMLGKDQPVILQLLDLPQAQAAVKGVVMELEDCAFPLLAGVVITDDPKVAFKDADVALLVGARPRSKGMERKDLLEANAQIFTVQGKALDEVASRNVKVLVVGNPANTNAYIAMKSAPSLPRENFTAMLRLDHNRALSQIAAKTGKPVASIEKMFVWGNHSPTMYADYRYATVDGKSVKDMINDPVWNNDVFLPTVGKRGAAIIEARGLSSAASAANAAIDHVHDWVLGTNGKVVTMGIPSNGEYGIPADTMFGYPVTCANGKYEIVKGLEIDAYSQEKINITLNELEEEKAGVQHLLG.

Position 12 to 18 (12 to 18 (GAAGQIG)) interacts with NAD(+). The substrate site is built by R93 and R99. NAD(+) is bound by residues N106, Q113, and 130–132 (VGN). N132 and R163 together coordinate substrate. H188 acts as the Proton acceptor in catalysis.

The protein belongs to the LDH/MDH superfamily. MDH type 2 family.

It catalyses the reaction (S)-malate + NAD(+) = oxaloacetate + NADH + H(+). Catalyzes the reversible oxidation of malate to oxaloacetate. This is Malate dehydrogenase from Cupriavidus pinatubonensis (strain JMP 134 / LMG 1197) (Cupriavidus necator (strain JMP 134)).